Here is a 314-residue protein sequence, read N- to C-terminus: Homoserine kinase (314 aa).

95 to 105 (PHSRGLGSSAA) lines the ATP pocket.

Belongs to the GHMP kinase family. Homoserine kinase subfamily.

It localises to the cytoplasm. It carries out the reaction L-homoserine + ATP = O-phospho-L-homoserine + ADP + H(+). It participates in amino-acid biosynthesis; L-threonine biosynthesis; L-threonine from L-aspartate: step 4/5. Functionally, catalyzes the ATP-dependent phosphorylation of L-homoserine to L-homoserine phosphate. The chain is Homoserine kinase from Mycobacterium sp. (strain KMS).